Consider the following 119-residue polypeptide: Holo-[acyl-carrier-protein] synthase (119 aa).

Mg(2+)-binding residues include D8 and E58.

It belongs to the P-Pant transferase superfamily. AcpS family. The cofactor is Mg(2+).

The protein resides in the cytoplasm. The enzyme catalyses apo-[ACP] + CoA = holo-[ACP] + adenosine 3',5'-bisphosphate + H(+). Transfers the 4'-phosphopantetheine moiety from coenzyme A to a Ser of acyl-carrier-protein. This chain is Holo-[acyl-carrier-protein] synthase, found in Bacillus cereus (strain B4264).